The following is a 100-amino-acid chain: Small ribosomal subunit protein uS14c (100 aa).

It belongs to the universal ribosomal protein uS14 family. Part of the 30S ribosomal subunit.

The protein resides in the plastid. The protein localises to the chloroplast. Functionally, binds 16S rRNA, required for the assembly of 30S particles. The protein is Small ribosomal subunit protein uS14c of Chara vulgaris (Common stonewort).